The chain runs to 461 residues: Probable outer membrane lipoprotein SilC (461 aa).

The signal sequence occupies residues 1–17 (MFKLKLLSISTIFILAG). C18 carries the N-palmitoyl cysteine lipid modification. C18 carries S-diacylglycerol cysteine lipidation.

The protein belongs to the outer membrane factor (OMF) (TC 1.B.17) family.

The protein resides in the cell outer membrane. Functionally, component of the sil cation-efflux system that confers resistance to silver. May be part of a three-component cation/proton antiporter. This Salmonella typhimurium protein is Probable outer membrane lipoprotein SilC (silC).